Consider the following 187-residue polypeptide: Large ribosomal subunit protein uL5 (187 aa).

Belongs to the universal ribosomal protein uL5 family. Part of the 50S ribosomal subunit; part of the 5S rRNA/L5/L18/L25 subcomplex. Contacts the 5S rRNA and the P site tRNA. Forms a bridge to the 30S subunit in the 70S ribosome.

Functionally, this is one of the proteins that bind and probably mediate the attachment of the 5S RNA into the large ribosomal subunit, where it forms part of the central protuberance. In the 70S ribosome it contacts protein S13 of the 30S subunit (bridge B1b), connecting the 2 subunits; this bridge is implicated in subunit movement. Contacts the P site tRNA; the 5S rRNA and some of its associated proteins might help stabilize positioning of ribosome-bound tRNAs. In Gluconobacter oxydans (strain 621H) (Gluconobacter suboxydans), this protein is Large ribosomal subunit protein uL5.